The primary structure comprises 94 residues: HssA/B-like protein 51 (94 aa).

The disordered stretch occupies residues 1–25 (MTLFSSISSISNPMTNSKSRISSFG).

This sequence belongs to the hssA/B family.

This chain is HssA/B-like protein 51 (hssl51), found in Dictyostelium discoideum (Social amoeba).